The following is a 239-amino-acid chain: tRNA (guanine-N(7)-)-methyltransferase (239 aa).

Positions 69, 94, 121, and 144 each coordinate S-adenosyl-L-methionine. Asp144 is an active-site residue. Substrate is bound at residue Lys148. An interaction with RNA region spans residues 150 to 155; it reads RHNKRR. Substrate is bound by residues Asp180 and 217-220; that span reads TKFE.

This sequence belongs to the class I-like SAM-binding methyltransferase superfamily. TrmB family. As to quaternary structure, monomer.

It carries out the reaction guanosine(46) in tRNA + S-adenosyl-L-methionine = N(7)-methylguanosine(46) in tRNA + S-adenosyl-L-homocysteine. The protein operates within tRNA modification; N(7)-methylguanine-tRNA biosynthesis. Functionally, catalyzes the formation of N(7)-methylguanine at position 46 (m7G46) in tRNA. The chain is tRNA (guanine-N(7)-)-methyltransferase from Yersinia pestis (strain Pestoides F).